Here is a 117-residue protein sequence, read N- to C-terminus: Large ribosomal subunit protein uL24 (117 aa).

The protein belongs to the universal ribosomal protein uL24 family. Part of the 50S ribosomal subunit.

In terms of biological role, one of two assembly initiator proteins, it binds directly to the 5'-end of the 23S rRNA, where it nucleates assembly of the 50S subunit. Its function is as follows. One of the proteins that surrounds the polypeptide exit tunnel on the outside of the subunit. The chain is Large ribosomal subunit protein uL24 from Nostoc punctiforme (strain ATCC 29133 / PCC 73102).